A 961-amino-acid polypeptide reads, in one-letter code: Lon protease homolog, mitochondrial (961 aa).

The transit peptide at 1 to 67 (MAGGTGCVRL…SPAAAGHWRG (67 aa)) directs the protein to the mitochondrion. 2 disordered regions span residues 76-103 (GGGAFSGGEDASEGGAEDGASGVGGSAG) and 220-262 (QLEV…VVVG). The Lon N-terminal domain occupies 125–371 (LPLIAVTRNP…KALSLLKKEF (247 aa)). Positions 235–244 (KLRKKPKRGK) are enriched in basic residues. Positions 245 to 257 (KEAEEDGATKRPL) are enriched in basic and acidic residues. 524-531 (GPPGVGKT) is a binding site for ATP. Residues 760–951 (VTPPGVVMGL…REIFDIAFPE (192 aa)) form the Lon proteolytic domain. Positions 784–801 (SLRRPRDRDSDKGDKDGS) are enriched in basic and acidic residues. The disordered stretch occupies residues 784 to 803 (SLRRPRDRDSDKGDKDGSLE). Residues S857 and K900 contribute to the active site.

Belongs to the peptidase S16 family. In terms of assembly, homohexamer. Organized in a ring with a central cavity. The ATP-binding and proteolytic domains (AP-domain) form a hexameric chamber, while the N-terminal domain is arranged as a trimer of dimers. DNA and RNA binding is stimulated by substrate and inhibited by ATP binding. Interacts with TWNK and mitochondrial DNA polymerase subunit POLG.

It is found in the mitochondrion matrix. It catalyses the reaction Hydrolysis of proteins in presence of ATP.. ATP-dependent serine protease that mediates the selective degradation of misfolded, unassembled or oxidatively damaged polypeptides as well as certain short-lived regulatory proteins in the mitochondrial matrix. Endogenous substrates include mitochondrial steroidogenic acute regulatory (StAR) protein, DELE1, helicase Twinkle (TWNK) and the large ribosomal subunit protein MRPL32/bL32m. MRPL32/bL32m is protected from degradation by LONP1 when it is bound to a nucleic acid (RNA), but TWNK is not. May also have a chaperone function in the assembly of inner membrane protein complexes. Participates in the regulation of mitochondrial gene expression and in the maintenance of the integrity of the mitochondrial genome. Binds to mitochondrial promoters and RNA in a single-stranded, site-specific, and strand-specific manner. May regulate mitochondrial DNA replication and/or gene expression using site-specific, single-stranded DNA binding to target the degradation of regulatory proteins binding to adjacent sites in mitochondrial promoters. The polypeptide is Lon protease homolog, mitochondrial (Bos taurus (Bovine)).